The following is a 902-amino-acid chain: Gamma-tubulin complex component 2 (902 aa).

Phosphotyrosine is present on Tyr83. The tract at residues 874-902 (AERSQKATPQVPVLRGPPAPAPRVAVTAQ) is disordered.

It belongs to the TUBGCP family. As to quaternary structure, component of the gamma-tubulin ring complex (gTuRC) consisting of TUBGCP2, TUBGCP3, TUBGCP4, TUBGCP5 and TUBGCP6 and gamma-tubulin TUBG1 or TUBG2. TUBGCP2, TUBGCP3, TUBGCP4, TUBGCP5 and TUBGCP6 assemble in a 5:5:2:1:1 stoichiometry; each is associated with a gamma-tubulin, thereby arranging 14 gamma-tubulins in a helical manner. Gamma-tubulin at the first position is blocked by TUBGCP3 at the last position, allowing 13 protafilaments to grow into a microtubule. The gTuRC (via TUBGCP3 and TUBGCP6) interacts with ACTB and MZT1; the interactions form a luminal bridge that stabilizes the initial structure during complex assembly. The gTuRC (via TUBGCP2) interacts with MZT2A/MZT2B and CDK5RAP2 (via CM1 motif); the interactions play a role in gTuRC activation. Interacts with ATF5; the ATF5:PCNT:polyglutamylated tubulin (PGT) tripartite unites the mother centriole and the pericentriolar material (PCM) in the centrosome. As to expression, ubiquitously expressed.

The protein localises to the cytoplasm. Its subcellular location is the cytoskeleton. It is found in the microtubule organizing center. It localises to the centrosome. Its function is as follows. Component of the gamma-tubulin ring complex (gTuRC) which mediates microtubule nucleation. The gTuRC regulates the minus-end nucleation of alpha-beta tubulin heterodimers that grow into microtubule protafilaments, a critical step in centrosome duplication and spindle formation. Plays a role in neuronal migration. This Homo sapiens (Human) protein is Gamma-tubulin complex component 2 (TUBGCP2).